Reading from the N-terminus, the 1230-residue chain is Cullin-associated NEDD8-dissociated protein 1 (1230 aa).

The residue at position 2 (Ala-2) is an N-acetylalanine. HEAT repeat units follow at residues Ala-2–Ile-39, Asp-44–Glu-81, Gln-83–Pro-119, Cys-131–Gln-165, Asn-171–Asn-208, Val-210–His-247, Arg-248–Phe-282, Glu-289–Glu-366, Glu-370–Pro-407, Pro-424–Gly-467, Gln-471–Pro-510, and Pro-515–Pro-552. The interval Asp-315 to Asp-344 is disordered. Ser-335 carries the phosphoserine modification. The residue at position 558 (Ser-558) is a Phosphoserine. 15 HEAT repeats span residues Pro-563–Asp-602, Pro-606–Asp-643, Pro-646–Asp-683, Ala-688–Ser-725, Lys-729–Asn-768, Leu-770–Arg-808, Ala-809–Val-845, Ser-852–Pro-889, Glu-890–Pro-927, Tyr-928–Leu-960, Ile-961–Gln-998, Pro-1002–Ser-1039, Asp-1043–Leu-1097, Arg-1099–Leu-1133, and Gln-1140–Ala-1189. Lys-971 carries the N6-acetyllysine modification.

It belongs to the CAND family. As to quaternary structure, interacts with TBP. Part of a complex that contains CUL1 and RBX1. Interacts with unneddylated cullins: interacts with CUL1, CUL2, CUL3, CUL4A, CUL4B and CUL5. Does not bind neddylated CUL1. Interaction with cullins is abolished in presence of COMMD1, which antagonizes with CAND1 for interacting with cullins. Interacts with ERCC6. Interacts with DCUN1D1, DCUN1D2, DCUN1D3, DCUN1D4 and DCUN1D5; these interactions are bridged by cullins and strongly inhibits the neddylation of cullins.

Its subcellular location is the cytoplasm. The protein resides in the nucleus. Functionally, key assembly factor of SCF (SKP1-CUL1-F-box protein) E3 ubiquitin ligase complexes that promotes the exchange of the substrate-recognition F-box subunit in SCF complexes, thereby playing a key role in the cellular repertoire of SCF complexes. Acts as a F-box protein exchange factor. The exchange activity of CAND1 is coupled with cycles of neddylation conjugation: in the deneddylated state, cullin-binding CAND1 binds CUL1-RBX1, increasing dissociation of the SCF complex and promoting exchange of the F-box protein. Probably plays a similar role in other cullin-RING E3 ubiquitin ligase complexes. This Mus musculus (Mouse) protein is Cullin-associated NEDD8-dissociated protein 1 (Cand1).